We begin with the raw amino-acid sequence, 345 residues long: Splicing factor YJU2 (345 aa).

Residues C43, C46, C80, and C83 each coordinate Zn(2+). The disordered stretch occupies residues 205–345; it reads KRLRDSDSEE…YSDSDDSSSD (141 aa). Positions 217-232 are enriched in basic and acidic residues; sequence ENAKERSKKHIADKPT. Composition is skewed to low complexity over residues 308–317 and 327–337; these read SSITSSSASS and GSSLGLLGAYS.

This sequence belongs to the CWC16 family. YJU2 subfamily. Component of the spliceosome. Present in the activated B complex, the catalytically activated B* complex which catalyzes the branching, the catalytic step 1 C complex catalyzing the exon ligation, and the postcatalytic P complex containing the ligated exons (mRNA) and the excised lariat intron.

It localises to the nucleus. In terms of biological role, part of the spliceosome which catalyzes two sequential transesterification reactions, first the excision of the non-coding intron from pre-mRNA and then the ligation of the coding exons to form the mature mRNA. Plays a role in stabilizing the structure of the spliceosome catalytic core and docking of the branch helix into the active site, producing 5'-exon and lariat intron-3'-intermediates. May protect cells from TP53-dependent apoptosis upon dsDNA break damage through association with PRP19-CD5L complex. This chain is Splicing factor YJU2, found in Danio rerio (Zebrafish).